The primary structure comprises 360 residues: Histidinol-phosphate aminotransferase (360 aa).

Lys224 is modified (N6-(pyridoxal phosphate)lysine).

It belongs to the class-II pyridoxal-phosphate-dependent aminotransferase family. Histidinol-phosphate aminotransferase subfamily. Requires pyridoxal 5'-phosphate as cofactor.

It catalyses the reaction L-histidinol phosphate + 2-oxoglutarate = 3-(imidazol-4-yl)-2-oxopropyl phosphate + L-glutamate. It participates in amino-acid biosynthesis; L-histidine biosynthesis; L-histidine from 5-phospho-alpha-D-ribose 1-diphosphate: step 7/9. The chain is Histidinol-phosphate aminotransferase from Methanococcoides burtonii (strain DSM 6242 / NBRC 107633 / OCM 468 / ACE-M).